We begin with the raw amino-acid sequence, 68 residues long: Negative regulatory protein YxlD (68 aa).

2 consecutive transmembrane segments (helical) span residues 5 to 25 and 37 to 57; these read EIIITVAACLIVLAQGIFLFI and WGIVGLIQAPMPLICYYFFVI.

The protein localises to the cell membrane. Its function is as follows. Together with YxlE, is important for negative regulation of sigma Y activity, being the major negative regulator. The sequence is that of Negative regulatory protein YxlD (yxlD) from Bacillus subtilis (strain 168).